Here is a 133-residue protein sequence, read N- to C-terminus: Small ribosomal subunit protein uS12c (133 aa).

The protein belongs to the universal ribosomal protein uS12 family. In terms of assembly, part of the 30S ribosomal subunit.

The protein resides in the plastid. The protein localises to the chloroplast. In terms of biological role, with S4 and S5 plays an important role in translational accuracy. Located at the interface of the 30S and 50S subunits. This chain is Small ribosomal subunit protein uS12c (rps12), found in Chlamydomonas reinhardtii (Chlamydomonas smithii).